Here is a 415-residue protein sequence, read N- to C-terminus: Casein kinase I isoform delta (415 aa).

A Protein kinase domain is found at 9 to 277 (YRLGRKIGSG…YLRQLFRNLF (269 aa)). Residues 15–23 (IGSGSFGDI) and K38 each bind ATP. The active-site Proton acceptor is D128. The centrosomal localization signal (CLS) stretch occupies residues 278–364 (HRQGFSYDYV…TSPRPVSGME (87 aa)). Basic and acidic residues predominate over residues 301–315 (ADDAERERRDREERL). Residues 301–415 (ADDAERERRD…SSGLQSVVHR (115 aa)) are disordered. The segment at 317-342 (HSRNPATRGLPSTASGRLRGTQEVAP) is autoinhibitory. A phosphoserine mark is found at S328 and S331. Residues 347–358 (TPTSHTANTSPR) are compositionally biased toward polar residues. S370 carries the phosphoserine modification. R375 is modified (omega-N-methylarginine). Over residues 380–400 (NVSSSDLTGRQDTSRMSTSQI) the composition is skewed to polar residues. Phosphoserine is present on residues S382, S383, S384, P401, S407, and S411.

The protein belongs to the protein kinase superfamily. CK1 Ser/Thr protein kinase family. Casein kinase I subfamily. Monomer. Component of the circadian core oscillator, which includes the CRY proteins, CLOCK, or NPAS2, BMAL1 or BMAL2, CSNK1D and/or CSNK1E, TIMELESS and the PER proteins. Interacts directly with PER1 and PER2 which may lead to their degradation. Interacts with MAP1A. Interacts with MAPT/TAU, DBNDD2, AIB1/NCOA3 and ESR1. Interacts with AKAP9/AKAP450; this interaction promotes centrosomal subcellular location. Binds to tubulins in mitotic cells upon DNA damage. Interacts with GJA1. Interacts with SNAPIN. Interacts with DNMT1. Interacts with DDX3X; this interaction enhances CSNK1D kinase activity in vitro, but it is unclear whether this interaction is physiologically relevant. Interacts with FAM83A, FAM83B, FAM83E and FAM83H (via DUF1669). Post-translationally, autophosphorylated on serine and threonine residues; this autophosphorylation represses activity. Reactivated by phosphatase-mediated dephosphorylation. May be dephosphorylated by PP1. Expressed ubiquitously. However, kinase activity is not uniform, with highest kinase activity in splenocytes.

The protein resides in the cytoplasm. It is found in the nucleus. The protein localises to the cytoskeleton. Its subcellular location is the microtubule organizing center. It localises to the centrosome. The protein resides in the perinuclear region. It is found in the cell membrane. The protein localises to the spindle. Its subcellular location is the golgi apparatus. It catalyses the reaction L-seryl-[protein] + ATP = O-phospho-L-seryl-[protein] + ADP + H(+). The catalysed reaction is L-threonyl-[protein] + ATP = O-phospho-L-threonyl-[protein] + ADP + H(+). It carries out the reaction L-seryl-[tau protein] + ATP = O-phospho-L-seryl-[tau protein] + ADP + H(+). The enzyme catalyses L-threonyl-[tau protein] + ATP = O-phospho-L-threonyl-[tau protein] + ADP + H(+). Its activity is regulated as follows. Exhibits substrate-dependent heparin activation. Drug-mediated inhibition leads to a delay of the oscillations with the magnitude of this effect dependent upon the timing of drug administration. Inhibited by phosphorylation. Functionally, essential serine/threonine-protein kinase that regulates diverse cellular growth and survival processes including Wnt signaling, DNA repair and circadian rhythms. It can phosphorylate a large number of proteins. Casein kinases are operationally defined by their preferential utilization of acidic proteins such as caseins as substrates. Phosphorylates connexin-43/GJA1, MAP1A, SNAPIN, MAPT/TAU, TOP2A, DCK, HIF1A, EIF6, p53/TP53, DVL2, DVL3, ESR1, AIB1/NCOA3, DNMT1, PKD2, YAP1, PER1 and PER2. Central component of the circadian clock. In balance with PP1, determines the circadian period length through the regulation of the speed and rhythmicity of PER1 and PER2 phosphorylation. Controls PER1 and PER2 nuclear transport and degradation. YAP1 phosphorylation promotes its SCF(beta-TRCP) E3 ubiquitin ligase-mediated ubiquitination and subsequent degradation. DNMT1 phosphorylation reduces its DNA-binding activity. Phosphorylation of ESR1 and AIB1/NCOA3 stimulates their activity and coactivation. Phosphorylation of DVL2 and DVL3 regulates WNT3A signaling pathway that controls neurite outgrowth. Phosphorylates NEDD9/HEF1. EIF6 phosphorylation promotes its nuclear export. Triggers down-regulation of dopamine receptors in the forebrain. Activates DCK in vitro by phosphorylation. TOP2A phosphorylation favors DNA cleavable complex formation. May regulate the formation of the mitotic spindle apparatus in extravillous trophoblast. Modulates connexin-43/GJA1 gap junction assembly by phosphorylation. Probably involved in lymphocyte physiology. Regulates fast synaptic transmission mediated by glutamate. The sequence is that of Casein kinase I isoform delta (Csnk1d) from Mus musculus (Mouse).